A 352-amino-acid chain; its full sequence is Photosystem II D2 protein 2 (352 aa).

A helical membrane pass occupies residues 40–60; it reads CAYLALGGWLTGTSFVTSWYT. His117 is a binding site for chlorophyll a. A helical transmembrane segment spans residues 124-140; sequence GFMLRQFEIARLVGVRP. 2 residues coordinate pheophytin a: Gln129 and Asn142. Residues 152–165 traverse the membrane as a helical segment; that stretch reads VFVSVFLMYPLGQS. His197 contacts chlorophyll a. The helical transmembrane segment at 207–227 threads the bilayer; that stretch reads GALLCAIHGATVENTLFEDSE. His214 and Phe261 together coordinate a plastoquinone. His214 lines the Fe cation pocket. His268 provides a ligand contact to Fe cation. A helical transmembrane segment spans residues 278–294; sequence GLWMSSIGIVGLALNLR.

Belongs to the reaction center PufL/M/PsbA/D family. As to quaternary structure, PSII is composed of 1 copy each of membrane proteins PsbA, PsbB, PsbC, PsbD, PsbE, PsbF, PsbH, PsbI, PsbJ, PsbK, PsbL, PsbM, PsbT, PsbX, PsbY, PsbZ, Psb30/Ycf12, peripheral proteins PsbO, CyanoQ (PsbQ), PsbU, PsbV and a large number of cofactors. It forms dimeric complexes. The D1/D2 heterodimer binds P680, chlorophylls that are the primary electron donor of PSII, and subsequent electron acceptors. It shares a non-heme iron and each subunit binds pheophytin, quinone, additional chlorophylls, carotenoids and lipids. There is also a Cl(-1) ion associated with D1 and D2, which is required for oxygen evolution. The PSII complex binds additional chlorophylls, carotenoids and specific lipids. serves as cofactor.

The protein localises to the cellular thylakoid membrane. It carries out the reaction 2 a plastoquinone + 4 hnu + 2 H2O = 2 a plastoquinol + O2. In terms of biological role, photosystem II (PSII) is a light-driven water:plastoquinone oxidoreductase that uses light energy to abstract electrons from H(2)O, generating O(2) and a proton gradient subsequently used for ATP formation. It consists of a core antenna complex that captures photons, and an electron transfer chain that converts photonic excitation into a charge separation. The D1/D2 (PsbA/PsbD) reaction center heterodimer binds P680, the primary electron donor of PSII as well as several subsequent electron acceptors. D2 is needed for assembly of a stable PSII complex. The chain is Photosystem II D2 protein 2 from Synechococcus sp. (strain ATCC 27144 / PCC 6301 / SAUG 1402/1) (Anacystis nidulans).